Here is a 314-residue protein sequence, read N- to C-terminus: RNA 2'-O-methyltransferase FBLL1 (314 aa).

Residues 1–59 are compositionally biased toward gly residues; the sequence is MKPAGGRGGWGWGGGKGGSKGGDTGSGTKGGFGARTRGSSGGGRGRGRGGGGGGGGGGG. Residues 1–82 are disordered; the sequence is MKPAGGRGGW…RRKKGITVSV (82 aa). At R7 the chain carries Omega-N-methylarginine. A compositionally biased stretch (basic residues) spans 64 to 77; the sequence is RGGPGKNKNRRKKG. S-adenosyl-L-methionine contacts are provided by residues 166–167, 185–186, 210–211, and 230–233; these read TT, EF, DA, and DVAQ.

It belongs to the methyltransferase superfamily. Fibrillarin family. Component of a box C/D small nucleolar ribonucleoprotein (snoRNP) complex composed of FBLL1, SNU13/NHP2L1, NOP56 and NOP58 and a guide snoRNA which mediates 2'-hydroxyl ribose methylation in RNAs.

It localises to the nucleus. It is found in the nucleolus. The catalysed reaction is a ribonucleotide in RNA + S-adenosyl-L-methionine = a 2'-O-methylribonucleotide in RNA + S-adenosyl-L-homocysteine + H(+). Functionally, S-adenosyl-L-methionine-dependent RNA methyltransferase that catalyzes 2'-hydroxyl ribose methylation in RNAs. Functions as part of box C/D small nucleolar ribonucleoprotein (snoRNP) complexes, where guide snoRNAs ensure methylation specificity through base pairing with RNA substrates. Exhibits broad substrate specificity, methylating multiple sites on ribosomal RNAs (rRNAs) and messenger RNAs (mRNAs) depending on the guide snoRNA incorporated in the complex. Specifically expressed in brain, it regulates the expression of GAP43 by stabilizing its mRNA through methylation and thereby plays an indirect role in neuronal differentiation. The protein is RNA 2'-O-methyltransferase FBLL1 of Mus musculus (Mouse).